The primary structure comprises 969 residues: MAFALGQRWISDTESDLGLGTVVALDARTVTLMFAASEENRVYASNDAPVTRVVFNVGDVVECQEGWSLKVEQVVEENGLYTYLGMREDTEETGVALREIFLSNQIRFNKPQDKMYAGQIDRMDNFVLRYRALKNQYEQHRSPMRGLCGMRAGLIPHQLYIAHEVGRRHAPRVLLADEVGLGKTIEAGMIIHQQVLLGRAERILIVVPETLQHQWLVEMMRRFNLHFSIFDEERCIEAFAESDNPFDTQQYVLCSLDFLRKSRKRFEQALEADWDLLVVDEAHHLEWSQDKPSRGYQVVEGLAERTPGVLLLTATPEQLGRESHFARLRLLDSDRFYDYAAFVEEEAQYAPVADAITALFSGVKLADEAKNQITELLSEQDVEPLFRIIESNADEESKAIARQELIDNLMDRHGTGRVLFRNTRAAIKGFPVRNVHLLPMPIPTQYTTSMRVSGMIGGKLAPEARAMKNLYPEEIFQEFEGEESSWWQFDCRVNWLLEKLKAQRSEKVLVIASRASTALQLEQALREREGIRATVFHEGMSILERDKAAAYFAQEEGGAQVLICSEIGSEGRNFQFANQLVMFDLPFNPDLLEQRIGRLDRIGQKRDIDIHVPYLQGTAQEVLARWFNEGLNAFAETCPTGRTVYDQVSDQLIEMLASGSNEALNDVIAESAKLNQALKADLEQGRDRLLEMHSNGGEKAQQIVAEIAAKDGDTNLVSFALSLFDTIGLNQDDKGENAIVVTPSEHMMVPSYPGLPYEGATITFDRDTALSREDMHFISWEHPMIQGGIDLLMSEGVGTCAVSLLKNKALPVGTLLLELIYAVDAQAPKRSGIGRFLPRTPIRLMMDARGNDLSAQVEFESFNRQLSPVNRHLASKLVSSVQNDIHRLIEAGDQLVVENVEAIRQQAQQEMQQSLNSELERLQALKAVNPNIRDEEIEAIDAQIKELNGYIAKAQFQLDSLRLIVVSHN.

Positions 164-334 constitute a Helicase ATP-binding domain; it reads EVGRRHAPRV…FARLRLLDSD (171 aa). 177 to 184 is an ATP binding site; the sequence is DEVGLGKT. Residues 280 to 283 carry the DEAH box motif; that stretch reads DEAH. Residues 492–668 enclose the Helicase C-terminal domain; the sequence is RVNWLLEKLK…GSNEALNDVI (177 aa).

Belongs to the SNF2/RAD54 helicase family. RapA subfamily. In terms of assembly, interacts with the RNAP. Has a higher affinity for the core RNAP than for the holoenzyme. Its ATPase activity is stimulated by binding to RNAP.

Transcription regulator that activates transcription by stimulating RNA polymerase (RNAP) recycling in case of stress conditions such as supercoiled DNA or high salt concentrations. Probably acts by releasing the RNAP, when it is trapped or immobilized on tightly supercoiled DNA. Does not activate transcription on linear DNA. Probably not involved in DNA repair. In Vibrio vulnificus (strain YJ016), this protein is RNA polymerase-associated protein RapA.